The chain runs to 338 residues: Ferrochelatase (338 aa).

Fe cation contacts are provided by histidine 202 and glutamate 283.

Belongs to the ferrochelatase family.

Its subcellular location is the cytoplasm. It catalyses the reaction heme b + 2 H(+) = protoporphyrin IX + Fe(2+). It participates in porphyrin-containing compound metabolism; protoheme biosynthesis; protoheme from protoporphyrin-IX: step 1/1. Catalyzes the ferrous insertion into protoporphyrin IX. This is Ferrochelatase from Acinetobacter baumannii (strain AB307-0294).